Consider the following 751-residue polypeptide: Protein WEAK CHLOROPLAST MOVEMENT UNDER BLUE LIGHT-like 3 (751 aa).

S113 carries the post-translational modification Phosphoserine. Coiled-coil stretches lie at residues 165 to 558 (ERRK…ALQE) and 588 to 647 (QALE…KARD). Basic and acidic residues-rich tracts occupy residues 455–467 (RERQ…KQKE) and 625–689 (NREM…RNKE). 2 disordered regions span residues 455–479 (RERQ…DKDA) and 625–751 (NREM…HSHK). The segment covering 704–723 (GSSSNNTGGSTTTNNNNLTP) has biased composition (low complexity).

It belongs to the WEB family.

This chain is Protein WEAK CHLOROPLAST MOVEMENT UNDER BLUE LIGHT-like 3 (WEL3), found in Arabidopsis thaliana (Mouse-ear cress).